The primary structure comprises 209 residues: A-type ATP synthase subunit D (209 aa).

Belongs to the V-ATPase D subunit family. In terms of assembly, has multiple subunits with at least A(3), B(3), C, D, E, F, H, I and proteolipid K(x).

Its subcellular location is the cell membrane. Its function is as follows. Component of the A-type ATP synthase that produces ATP from ADP in the presence of a proton gradient across the membrane. The polypeptide is A-type ATP synthase subunit D (Methanoregula boonei (strain DSM 21154 / JCM 14090 / 6A8)).